The sequence spans 128 residues: Large ribosomal subunit protein bL12 (128 aa).

This sequence belongs to the bacterial ribosomal protein bL12 family. As to quaternary structure, homodimer. Part of the ribosomal stalk of the 50S ribosomal subunit. Forms a multimeric L10(L12)X complex, where L10 forms an elongated spine to which 2 to 4 L12 dimers bind in a sequential fashion. Binds GTP-bound translation factors.

Forms part of the ribosomal stalk which helps the ribosome interact with GTP-bound translation factors. Is thus essential for accurate translation. The protein is Large ribosomal subunit protein bL12 of Corynebacterium efficiens (strain DSM 44549 / YS-314 / AJ 12310 / JCM 11189 / NBRC 100395).